An 846-amino-acid polypeptide reads, in one-letter code: Penicillin G acylase (846 aa).

A signal peptide spans methionine 1–alanine 26. Glutamate 178 is a Ca(2+) binding site. Positions alanine 236–threonine 289 are cleaved as a propeptide — spacer peptide. Serine 290 (nucleophile) is an active-site residue. Residues aspartate 362, valine 364, aspartate 365, proline 494, and aspartate 541 each coordinate Ca(2+).

This sequence belongs to the peptidase S45 family. In terms of assembly, heterodimer of an alpha subunit and a beta subunit processed from the same precursor. Requires Ca(2+) as cofactor.

It is found in the periplasm. The enzyme catalyses a penicillin + H2O = 6-aminopenicillanate + a carboxylate. This chain is Penicillin G acylase (pac), found in Escherichia coli.